The chain runs to 486 residues: FAD-dependent oxidoreductase domain-containing protein 1 (486 aa).

A helical membrane pass occupies residues 62–82 (EHSDVVIVGGGVLGLSVAYWL).

Associates with components of the mitochondrial respiratory chain complex I. It depends on FAD as a cofactor.

It localises to the mitochondrion inner membrane. Required for the assembly of the mitochondrial membrane respiratory chain NADH dehydrogenase (Complex I). Involved in mid-late stages of complex I assembly. The chain is FAD-dependent oxidoreductase domain-containing protein 1 from Homo sapiens (Human).